The following is a 203-amino-acid chain: V-type ATP synthase subunit D (203 aa).

This sequence belongs to the V-ATPase D subunit family.

Produces ATP from ADP in the presence of a proton gradient across the membrane. The chain is V-type ATP synthase subunit D from Chlamydia trachomatis serovar L2 (strain ATCC VR-902B / DSM 19102 / 434/Bu).